The primary structure comprises 251 residues: Pyrroloquinoline-quinone synthase (251 aa).

It belongs to the PqqC family.

It catalyses the reaction 6-(2-amino-2-carboxyethyl)-7,8-dioxo-1,2,3,4,7,8-hexahydroquinoline-2,4-dicarboxylate + 3 O2 = pyrroloquinoline quinone + 2 H2O2 + 2 H2O + H(+). It functions in the pathway cofactor biosynthesis; pyrroloquinoline quinone biosynthesis. Ring cyclization and eight-electron oxidation of 3a-(2-amino-2-carboxyethyl)-4,5-dioxo-4,5,6,7,8,9-hexahydroquinoline-7,9-dicarboxylic-acid to PQQ. This is Pyrroloquinoline-quinone synthase from Pseudomonas entomophila (strain L48).